The sequence spans 602 residues: Adenylosuccinate synthetase (602 aa).

GTP contacts are provided by residues 74-80 (GDEGKGK) and 104-106 (GHT). D75 serves as the catalytic Proton acceptor. 2 residues coordinate Mg(2+): D75 and G104. IMP-binding positions include 75 to 78 (DEGK), 102 to 105 (NAGH), T189, K203, Q315, T331, and K459. Catalysis depends on H105, which acts as the Proton donor. 455–461 (AVTKKPR) lines the substrate pocket. GTP is bound by residues R461 and 589 to 591 (GNG).

It belongs to the adenylosuccinate synthetase family. Homodimer. Requires Mg(2+) as cofactor.

Its subcellular location is the cytoplasm. It catalyses the reaction IMP + L-aspartate + GTP = N(6)-(1,2-dicarboxyethyl)-AMP + GDP + phosphate + 2 H(+). It functions in the pathway purine metabolism; AMP biosynthesis via de novo pathway; AMP from IMP: step 1/2. Its function is as follows. Plays an important role in the salvage pathway for purine nucleotide biosynthesis. Catalyzes the first committed step in the biosynthesis of AMP from IMP. The chain is Adenylosuccinate synthetase from Trypanosoma brucei gambiense (strain MHOM/CI/86/DAL972).